The primary structure comprises 135 residues: Transcriptional regulator HosA (135 aa).

One can recognise an HTH marR-type domain in the interval 4–134; the sequence is RNKAFHQLRQ…FVQLVRKMMN (131 aa). Positions 48 to 71 form a DNA-binding region, H-T-H motif; that stretch reads QVALIEAAVSTKATLAEMLARMEN.

Functionally, involved in the temperature-dependent positive control of flagellum-driven swimming motility and cellular aggregation. Regulates fliC expression by directly interacting with fliC promoter. The protein is Transcriptional regulator HosA (hosA) of Escherichia coli O157:H7.